The primary structure comprises 399 residues: Lymphoid enhancer-binding factor 1 (399 aa).

A compositionally biased stretch (gly residues) spans 1–14 (MPQLSGGGGGGGGD). The interval 1 to 62 (MPQLSGGGGG…IKSSLVNESE (62 aa)) is CTNNB1-binding. The disordered stretch occupies residues 1–104 (MPQLSGGGGG…KHPDGGLYNK (104 aa)). Basic and acidic residues-rich tracts occupy residues 24–45 (IPFKDEGDPQKEKIFAEISHPE) and 82–98 (PYHDKAREHPDDGKHPD). Lys-27 participates in a covalent cross-link: Glycyl lysine isopeptide (Lys-Gly) (interchain with G-Cter in SUMO). The residue at position 132 (Ser-132) is a Phosphoserine. Thr-155 carries the post-translational modification Phosphothreonine; by NLK. Phosphoserine; by NLK is present on Ser-166. 2 disordered regions span residues 166–192 (SPGSHPSHIPSDVNSKQGMSRHPPAPD) and 268–298 (VKQEHPHTDSDLMHVKPQHEQRKEQEPKRPH). A Glycyl lysine isopeptide (Lys-Gly) (interchain with G-Cter in SUMO) cross-link involves residue Lys-269. Positions 269 to 296 (KQEHPHTDSDLMHVKPQHEQRKEQEPKR) are enriched in basic and acidic residues. Residues 299 to 367 (IKKPLNAFML…LHMQLYPGWS (69 aa)) constitute a DNA-binding region (HMG box). The disordered stretch occupies residues 369–399 (RDNYGKKKKRKREKLQESASGTGPRMTAAYI).

The protein belongs to the TCF/LEF family. In terms of assembly, binds the armadillo repeat of CTNNB1 and forms a stable complex. Interacts with EP300, TLE1 and PIASG. Binds ALYREF/THOC4, MDFI and MDFIC. Interacts with NLK. Interacts with DAZAP2. Post-translationally, phosphorylated at Thr-155 and/or Ser-166 by NLK. Phosphorylation by NLK at these sites represses LEF1-mediated transcriptional activation of target genes of the canonical Wnt signaling pathway. In terms of tissue distribution, detected in thymus. Not detected in normal colon, but highly expressed in colon cancer biopsies and colon cancer cell lines. Expressed in several pancreatic tumors and weakly expressed in normal pancreatic tissue. Isoforms 1 and 5 are detected in several pancreatic cell lines.

It is found in the nucleus. Functionally, transcription factor that binds DNA in a sequence-specific manner. Participates in the Wnt signaling pathway. Activates transcription of target genes in the presence of CTNNB1 and EP300. PIAG antagonizes both Wnt-dependent and Wnt-independent activation by LEF1. TLE1, TLE2, TLE3 and TLE4 repress transactivation mediated by LEF1 and CTNNB1. Regulates T-cell receptor alpha enhancer function. Required for IL17A expressing gamma-delta T-cell maturation and development, via binding to regulator loci of BLK to modulate expression. Acts as a positive regulator of odontoblast differentiation during mesenchymal tooth germ formation, expression is repressed during the bell stage by MSX1-mediated inhibition of CTNNB1 signaling. May play a role in hair cell differentiation and follicle morphogenesis. Its function is as follows. Transcriptionally activates MYC and CCND1 expression and enhances proliferation of pancreatic tumor cells. Lacks the CTNNB1 interaction domain and may therefore be an antagonist for Wnt signaling. In terms of biological role, transcriptionally activates the fibronectin promoter, binds to and represses transcription from the E-cadherin promoter in a CTNNB1-independent manner, and is involved in reducing cellular aggregation and increasing cell migration of pancreatic cancer cells. The protein is Lymphoid enhancer-binding factor 1 of Homo sapiens (Human).